A 63-amino-acid chain; its full sequence is Large ribosomal subunit protein bL28 (63 aa).

This sequence belongs to the bacterial ribosomal protein bL28 family.

In Clostridium botulinum (strain ATCC 19397 / Type A), this protein is Large ribosomal subunit protein bL28.